A 324-amino-acid chain; its full sequence is HTH-type transcriptional regulator CysB (324 aa).

The HTH lysR-type domain occupies 1-59; that stretch reads MKLQQLRYIVEVVNHNLNVSSTAEGLYTSQPGISKQVRMLEDELGIQIFARSGKHLTQV. The H-T-H motif DNA-binding region spans 19–38; it reads VSSTAEGLYTSQPGISKQVR.

It belongs to the LysR transcriptional regulatory family. Homotetramer.

The protein resides in the cytoplasm. Its function is as follows. This protein is a positive regulator of gene expression for the cysteine regulon. The inducer for CysB is N-acetylserine. Thiosulfate and sulfide act as anti-inducers. This Klebsiella pneumoniae protein is HTH-type transcriptional regulator CysB (cysB).